We begin with the raw amino-acid sequence, 925 residues long: Calpain-B (925 aa).

A Calpain catalytic domain is found at 259-558 (MFEDPDFPAT…FDRVEICNLS (300 aa)). Active-site residues include C314, H470, and N498. The domain III stretch occupies residues 559–728 (PDSLTEDQQH…TRNNMEENDD (170 aa)). The tract at residues 723 to 753 (MEENDDEVGFGETDDRIAPSLPPPTPKEEDD) is disordered. Residues 729–748 (EVGFGETDDRIAPSLPPPTP) are linker. Positions 749–925 (KEEDDPQRIA…DDWLERTIYS (177 aa)) are domain IV. 2 EF-hand domains span residues 796–831 (FSKD…IAKW) and 826–861 (TDIA…AGYH). Ca(2+) contacts are provided by D809, D811, S813, R815, E820, D839, T843, S845, and H850.

It belongs to the peptidase C2 family. In terms of processing, undergoes calcium-dependent autolytic cleavage between Asn-74 and Ala-75 and between Gln-224 and Asn-225 to produce two major products, calpain B catalytic subunit 1 and calpain B catalytic subunit 2. This autolysis is necessary for activation of the protein. As to expression, strongly expressed in follicular and border cells of the oocyte. Ubiquitously expressed in early embryos. Localized to the trachea and their orifices, and to the larynx of late embryos. Restricted to the salivary gland in third instar larvae.

The protein resides in the cytoplasm. The protein localises to the membrane. Activated by millimolar concentrations of calcium. In terms of biological role, calcium-regulated non-lysosomal thiol-protease. This is Calpain-B from Drosophila melanogaster (Fruit fly).